The sequence spans 473 residues: Heavy metal-associated isoprenylated plant protein 32 (473 aa).

Residues 9-72 form the HMA domain; that stretch reads IQTCVLKVNI…KLAKSGKHAE (64 aa). Residues C20 and C23 each contribute to the a metal cation site. 3 disordered regions span residues 96–139, 162–230, and 246–343; these read QIDH…KMGQ, KLPP…PNMT, and ANLA…QNMS. Positions 118–131 are enriched in gly residues; the sequence is KNGGGGGGGGGGGN. Residues 187 to 217 show a composition bias toward acidic residues; that stretch reads PEDDDDDDFSDEFDDEFTDDDDDEFDDEFDD. Residues 253–339 show a composition bias toward gly residues; sequence AKNGGKGAPA…GFRPMGGGGP (87 aa). Position 470 is a cysteine methyl ester (C470). C470 is lipidated: S-farnesyl cysteine. A propeptide spans 471–473 (removed in mature form); it reads DIM.

The protein belongs to the HIPP family.

Functionally, heavy-metal-binding protein. The chain is Heavy metal-associated isoprenylated plant protein 32 from Arabidopsis thaliana (Mouse-ear cress).